A 51-amino-acid chain; its full sequence is Sperm protamine P1 (51 aa).

Disulfide bonds link C7/C15 and C38/C48.

Belongs to the protamine P1 family. In terms of assembly, cross-linked by interchain disulfide bonds around the DNA-helix. In terms of processing, phosphorylated by SRPK1. Testis.

It is found in the nucleus. Its subcellular location is the chromosome. Protamines substitute for histones in the chromatin of sperm during the haploid phase of spermatogenesis. They compact sperm DNA into a highly condensed, stable and inactive complex. This Mus musculus (Mouse) protein is Sperm protamine P1 (Prm1).